We begin with the raw amino-acid sequence, 209 residues long: Thiamine-phosphate synthase (209 aa).

4-amino-2-methyl-5-(diphosphooxymethyl)pyrimidine contacts are provided by residues 37–41 (QLREK) and Asn-69. The Mg(2+) site is built by Asp-70 and Asp-89. Ser-108 contacts 4-amino-2-methyl-5-(diphosphooxymethyl)pyrimidine. 134-136 (TNT) is a 2-[(2R,5Z)-2-carboxy-4-methylthiazol-5(2H)-ylidene]ethyl phosphate binding site. Lys-137 lines the 4-amino-2-methyl-5-(diphosphooxymethyl)pyrimidine pocket. 2-[(2R,5Z)-2-carboxy-4-methylthiazol-5(2H)-ylidene]ethyl phosphate is bound by residues Gly-164 and 184 to 185 (VS).

Belongs to the thiamine-phosphate synthase family. Requires Mg(2+) as cofactor.

The enzyme catalyses 2-[(2R,5Z)-2-carboxy-4-methylthiazol-5(2H)-ylidene]ethyl phosphate + 4-amino-2-methyl-5-(diphosphooxymethyl)pyrimidine + 2 H(+) = thiamine phosphate + CO2 + diphosphate. The catalysed reaction is 2-(2-carboxy-4-methylthiazol-5-yl)ethyl phosphate + 4-amino-2-methyl-5-(diphosphooxymethyl)pyrimidine + 2 H(+) = thiamine phosphate + CO2 + diphosphate. It catalyses the reaction 4-methyl-5-(2-phosphooxyethyl)-thiazole + 4-amino-2-methyl-5-(diphosphooxymethyl)pyrimidine + H(+) = thiamine phosphate + diphosphate. Its pathway is cofactor biosynthesis; thiamine diphosphate biosynthesis; thiamine phosphate from 4-amino-2-methyl-5-diphosphomethylpyrimidine and 4-methyl-5-(2-phosphoethyl)-thiazole: step 1/1. In terms of biological role, condenses 4-methyl-5-(beta-hydroxyethyl)thiazole monophosphate (THZ-P) and 2-methyl-4-amino-5-hydroxymethyl pyrimidine pyrophosphate (HMP-PP) to form thiamine monophosphate (TMP). This chain is Thiamine-phosphate synthase, found in Methanobrevibacter smithii (strain ATCC 35061 / DSM 861 / OCM 144 / PS).